The sequence spans 87 residues: Protein WFDC11 (87 aa).

A signal peptide spans 1–25; sequence MVSLMKLWIPMLMTFFCTVLLSVLG.

The protein localises to the secreted. The sequence is that of Protein WFDC11 (WFDC11) from Homo sapiens (Human).